Here is an 845-residue protein sequence, read N- to C-terminus: Alanine--tRNA ligase (845 aa).

Residues histidine 552, histidine 556, cysteine 653, and histidine 657 each contribute to the Zn(2+) site.

This sequence belongs to the class-II aminoacyl-tRNA synthetase family. Zn(2+) is required as a cofactor.

Its subcellular location is the cytoplasm. The catalysed reaction is tRNA(Ala) + L-alanine + ATP = L-alanyl-tRNA(Ala) + AMP + diphosphate. Its function is as follows. Catalyzes the attachment of alanine to tRNA(Ala) in a two-step reaction: alanine is first activated by ATP to form Ala-AMP and then transferred to the acceptor end of tRNA(Ala). Also edits incorrectly charged Ser-tRNA(Ala) and Gly-tRNA(Ala) via its editing domain. The protein is Alanine--tRNA ligase of Campylobacter fetus subsp. fetus (strain 82-40).